Reading from the N-terminus, the 1050-residue chain is Probable beta-glucosidase E (1050 aa).

Residues 1-87 (MPPPDSNPGS…RSSSTNGGHN (87 aa)) form a disordered region. The Cytoplasmic segment spans residues 1–174 (MPPPDSNPGS…VKYARIWRRT (174 aa)). The span at 11-20 (FRDHLKHDNK) shows a compositional bias: basic and acidic residues. The segment covering 47–56 (SPRSASASSS) has biased composition (low complexity). The segment covering 78–87 (RSSSTNGGHN) has biased composition (polar residues). The chain crosses the membrane as a helical; Signal-anchor for type II membrane protein span at residues 175–195 (LVVVIVALALLVWGFLRFTAA). The Extracellular portion of the chain corresponds to 196–1050 (QRQGPKVWPM…SRDLPLQAKY (855 aa)). N-linked (GlcNAc...) asparagine glycans are attached at residues asparagine 236, asparagine 244, asparagine 300, and asparagine 430. Aspartate 458 is a catalytic residue. N-linked (GlcNAc...) asparagine glycosylation is found at asparagine 501, asparagine 540, asparagine 605, asparagine 884, asparagine 920, asparagine 929, and asparagine 993.

This sequence belongs to the glycosyl hydrolase 3 family.

The protein resides in the cell membrane. The catalysed reaction is Hydrolysis of terminal, non-reducing beta-D-glucosyl residues with release of beta-D-glucose.. Its pathway is glycan metabolism; cellulose degradation. In terms of biological role, beta-glucosidases are one of a number of cellulolytic enzymes involved in the degradation of cellulosic biomass. Catalyzes the last step releasing glucose from the inhibitory cellobiose. The sequence is that of Probable beta-glucosidase E (bglE) from Aspergillus clavatus (strain ATCC 1007 / CBS 513.65 / DSM 816 / NCTC 3887 / NRRL 1 / QM 1276 / 107).